A 344-amino-acid polypeptide reads, in one-letter code: Heat-inducible transcription repressor HrcA (344 aa).

The protein belongs to the HrcA family.

Functionally, negative regulator of class I heat shock genes (grpE-dnaK-dnaJ and groELS operons). Prevents heat-shock induction of these operons. The chain is Heat-inducible transcription repressor HrcA from Anoxybacillus flavithermus (strain DSM 21510 / WK1).